A 402-amino-acid chain; its full sequence is Formate-dependent phosphoribosylglycinamide formyltransferase (402 aa).

Residues 25-26 and glutamate 85 contribute to the N(1)-(5-phospho-beta-D-ribosyl)glycinamide site; that span reads EL. ATP is bound by residues arginine 118, lysine 159, 164–169, 199–202, and glutamate 207; these read SSGKGQ and EQFV. Residues 123 to 318 enclose the ATP-grasp domain; the sequence is RLASEELGLP…EFELHAKAVL (196 aa). Positions 277 and 289 each coordinate Mg(2+). N(1)-(5-phospho-beta-D-ribosyl)glycinamide is bound by residues aspartate 296, lysine 365, and 372-373; that span reads RR.

It belongs to the PurK/PurT family. Homodimer.

The enzyme catalyses N(1)-(5-phospho-beta-D-ribosyl)glycinamide + formate + ATP = N(2)-formyl-N(1)-(5-phospho-beta-D-ribosyl)glycinamide + ADP + phosphate + H(+). It functions in the pathway purine metabolism; IMP biosynthesis via de novo pathway; N(2)-formyl-N(1)-(5-phospho-D-ribosyl)glycinamide from N(1)-(5-phospho-D-ribosyl)glycinamide (formate route): step 1/1. Functionally, involved in the de novo purine biosynthesis. Catalyzes the transfer of formate to 5-phospho-ribosyl-glycinamide (GAR), producing 5-phospho-ribosyl-N-formylglycinamide (FGAR). Formate is provided by PurU via hydrolysis of 10-formyl-tetrahydrofolate. The polypeptide is Formate-dependent phosphoribosylglycinamide formyltransferase (Corynebacterium efficiens (strain DSM 44549 / YS-314 / AJ 12310 / JCM 11189 / NBRC 100395)).